Here is a 2034-residue protein sequence, read N- to C-terminus: Pecanex-like protein 3 (2034 aa).

A run of 2 helical transmembrane segments spans residues 33-53 (CFHL…YMVL) and 54-74 (PPSL…FATI). Residues 96 to 118 (STMGELEEEPAQGDSNPPRDPGV) form a disordered region. Ser127 bears the Phosphoserine mark. Phosphothreonine is present on Thr129. Disordered stretches follow at residues 193 to 242 (IGDL…PLLK), 260 to 517 (DRAL…LRPP), and 540 to 625 (VLPA…SHSR). Positions 294-303 (KAGSSDSCFS) are enriched in polar residues. The span at 305–319 (TDRETLSSFKSEKTN) shows a compositional bias: basic and acidic residues. The N-linked (GlcNAc...) asparagine glycan is linked to Asn319. Position 370 is a phosphothreonine (Thr370). Residues 391–409 (PSKRQPPLRRHSPPGRAPR) show a composition bias toward basic residues. Phosphoserine occurs at positions 392 and 431. The span at 427 to 436 (GSELSPASSL) shows a compositional bias: polar residues. The span at 444–460 (TDSSSSTSCYSPESSRG) shows a compositional bias: low complexity. Positions 488 to 497 (TQRTPSTASA) are enriched in polar residues. Ser505 bears the Phosphoserine mark. 7 helical membrane passes run 790 to 812 (VLEN…LLLL), 819 to 836 (IWVF…YSLL), 852 to 872 (WVIA…IWLL), 880 to 900 (PFPP…FFCA), 903 to 923 (VATV…LPQV), 946 to 968 (SPLT…YGFC), and 980 to 1000 (HVPV…YHLS). Ser1025 carries the phosphoserine modification. 4 consecutive transmembrane segments (helical) span residues 1053 to 1073 (LVMC…TVFI), 1078 to 1098 (VLGF…HYLL), 1244 to 1264 (FVLT…HAFA), and 1280 to 1300 (LLSG…VFIM). At Ser1697 the chain carries Phosphoserine. N-linked (GlcNAc...) asparagine glycosylation occurs at Asn1770. The interval 1844 to 2034 (GGLTSLSNNP…AAQPLLEHQY (191 aa)) is disordered. Residues 1890-1910 (RPPPLLQWPPPRLPGPPPASP) show a composition bias toward pro residues. Ser1909 bears the Phosphoserine mark. Residues 1925–1939 (GLLSSEGPSGKWSLG) show a composition bias toward low complexity. Ser1955 bears the Phosphoserine mark. Low complexity predominate over residues 1969–1978 (LSLSLSLSLS).

The protein belongs to the pecanex family.

The protein localises to the membrane. In Homo sapiens (Human), this protein is Pecanex-like protein 3.